A 593-amino-acid polypeptide reads, in one-letter code: Maternal uncoordinated protein 2 (593 aa).

The protein belongs to the SCC4/mau-2 family. In terms of assembly, may heterodimerize with scc-2/SCC2 to form the cohesin loading complex.

It is found in the nucleus. It localises to the nucleoplasm. The protein resides in the cytoplasm. Its function is as follows. Plays an important role in the loading of the cohesin complex on to DNA. Forms a heterodimeric complex (also known as cohesin loading complex) with scc-2/SCC2 which mediates the loading of the cohesin complex onto chromatin. Required for normal development until the fourth larval stage. Functions cell autonomously to guide migrations during the development of the nervous system. Participates in the guidance of mechanosensory neuron AVM by a slt-1-independent mechanism. Regulates chromosome segregation in early embryos. The polypeptide is Maternal uncoordinated protein 2 (Caenorhabditis elegans).